Here is a 121-residue protein sequence, read N- to C-terminus: Large ribosomal subunit protein bL20 (121 aa).

Belongs to the bacterial ribosomal protein bL20 family.

Its function is as follows. Binds directly to 23S ribosomal RNA and is necessary for the in vitro assembly process of the 50S ribosomal subunit. It is not involved in the protein synthesizing functions of that subunit. In Francisella tularensis subsp. mediasiatica (strain FSC147), this protein is Large ribosomal subunit protein bL20.